Reading from the N-terminus, the 173-residue chain is Crossover junction endodeoxyribonuclease RuvC (173 aa).

Active-site residues include Asp8, Glu68, and Asp140. 3 residues coordinate Mg(2+): Asp8, Glu68, and Asp140.

It belongs to the RuvC family. Homodimer which binds Holliday junction (HJ) DNA. The HJ becomes 2-fold symmetrical on binding to RuvC with unstacked arms; it has a different conformation from HJ DNA in complex with RuvA. In the full resolvosome a probable DNA-RuvA(4)-RuvB(12)-RuvC(2) complex forms which resolves the HJ. Requires Mg(2+) as cofactor.

The protein localises to the cytoplasm. The catalysed reaction is Endonucleolytic cleavage at a junction such as a reciprocal single-stranded crossover between two homologous DNA duplexes (Holliday junction).. The RuvA-RuvB-RuvC complex processes Holliday junction (HJ) DNA during genetic recombination and DNA repair. Endonuclease that resolves HJ intermediates. Cleaves cruciform DNA by making single-stranded nicks across the HJ at symmetrical positions within the homologous arms, yielding a 5'-phosphate and a 3'-hydroxyl group; requires a central core of homology in the junction. The consensus cleavage sequence is 5'-(A/T)TT(C/G)-3'. Cleavage occurs on the 3'-side of the TT dinucleotide at the point of strand exchange. HJ branch migration catalyzed by RuvA-RuvB allows RuvC to scan DNA until it finds its consensus sequence, where it cleaves and resolves the cruciform DNA. This chain is Crossover junction endodeoxyribonuclease RuvC, found in Saccharophagus degradans (strain 2-40 / ATCC 43961 / DSM 17024).